The following is a 220-amino-acid chain: Heptaprenyl diphosphate synthase component 1 (220 aa).

As to quaternary structure, heterodimer of component I and II.

The enzyme catalyses 4 isopentenyl diphosphate + (2E,6E)-farnesyl diphosphate = all-trans-heptaprenyl diphosphate + 4 diphosphate. In terms of biological role, supplies heptaprenyl diphosphate, the precursor for the side chain of the isoprenoid quinone menaquinone-7 (MQ-7). The protein is Heptaprenyl diphosphate synthase component 1 (hepS) of Geobacillus stearothermophilus (Bacillus stearothermophilus).